Reading from the N-terminus, the 445-residue chain is Sporulation protein YkvU (445 aa).

12 helical membrane-spanning segments follow: residues 7–29, 39–61, 82–104, 109–131, 144–166, 172–194, 237–259, 269–291, 312–334, 349–371, 376–395, and 400–422; these read GIIL…NMIL, GLYM…ELPI, AFRM…LPFI, TYHP…TSIA, IAIA…FQWY, MAVL…YLYS, VNAI…GTAA, VAVT…MIPS, IFIT…GPLT, LLWP…IGMG, AFYH…YVLG, and LQML…LHYA.

The protein localises to the forespore membrane. This chain is Sporulation protein YkvU (ykvU), found in Bacillus subtilis (strain 168).